The following is a 189-amino-acid chain: Putative manganese efflux pump MntP (189 aa).

The next 6 helical transmembrane spans lie at P3–G23, L41–A61, A62–A82, F104–G124, I132–M152, and A168–F188.

The protein belongs to the MntP (TC 9.B.29) family.

Its subcellular location is the cell inner membrane. In terms of biological role, probably functions as a manganese efflux pump. This Paraburkholderia phytofirmans (strain DSM 17436 / LMG 22146 / PsJN) (Burkholderia phytofirmans) protein is Putative manganese efflux pump MntP.